The sequence spans 483 residues: Probable ATP-dependent RNA helicase DDX49 (483 aa).

The Q motif signature appears at 2 to 30 (AGFAELGLSSWLVEQCRQLGLKQPTPVQL). Residues 33 to 207 (IPAILEGRDC…GLATNQPFFW (175 aa)) form the Helicase ATP-binding domain. Position 46–53 (46–53 (AKTGSGKT)) interacts with ATP. A DEAD box motif is present at residues 152–155 (DEAD). The 165-residue stretch at 218 to 382 (QLDQRYLLVP…EFSVEEAEVL (165 aa)) folds into the Helicase C-terminal domain. The segment at 444–483 (KEKVEETLKRQKAGRAGHKGRPPRTPSGSHSGPVPSQGLV) is disordered. Residues 453–465 (RQKAGRAGHKGRP) show a composition bias toward basic residues.

Belongs to the DEAD box helicase family. DDX49/DBP8 subfamily.

It is found in the nucleus. It localises to the nucleolus. The enzyme catalyses ATP + H2O = ADP + phosphate + H(+). In terms of biological role, ATP-dependent RNA helicase that plays a role in various aspects of RNA metabolism including the regulation of mRNA export and the levels of pre-ribosomal RNA. Regulates the stability and synthesis of pre-ribosomal RNA and thereby regulates cell proliferation. Also possesses antiviral activity by recognizing gammaherpesvirus transcripts in the context of lytic reactivation. The chain is Probable ATP-dependent RNA helicase DDX49 (DDX49) from Homo sapiens (Human).